The chain runs to 197 residues: UPF0301 protein Adeh_3962 (197 aa).

It belongs to the UPF0301 (AlgH) family.

The sequence is that of UPF0301 protein Adeh_3962 from Anaeromyxobacter dehalogenans (strain 2CP-C).